We begin with the raw amino-acid sequence, 395 residues long: Acetylornithine aminotransferase (395 aa).

Pyridoxal 5'-phosphate contacts are provided by residues 117–118 (GA) and phenylalanine 144. Position 147 (arginine 147) interacts with N(2)-acetyl-L-ornithine. 230–233 (DEVQ) contributes to the pyridoxal 5'-phosphate binding site. N6-(pyridoxal phosphate)lysine is present on lysine 259. Residue serine 285 participates in N(2)-acetyl-L-ornithine binding. Threonine 286 serves as a coordination point for pyridoxal 5'-phosphate.

It belongs to the class-III pyridoxal-phosphate-dependent aminotransferase family. ArgD subfamily. As to quaternary structure, homodimer. Pyridoxal 5'-phosphate serves as cofactor.

It is found in the cytoplasm. The catalysed reaction is N(2)-acetyl-L-ornithine + 2-oxoglutarate = N-acetyl-L-glutamate 5-semialdehyde + L-glutamate. It functions in the pathway amino-acid biosynthesis; L-arginine biosynthesis; N(2)-acetyl-L-ornithine from L-glutamate: step 4/4. This Methanosarcina acetivorans (strain ATCC 35395 / DSM 2834 / JCM 12185 / C2A) protein is Acetylornithine aminotransferase.